Reading from the N-terminus, the 341-residue chain is S-adenosylmethionine:tRNA ribosyltransferase-isomerase (341 aa).

This sequence belongs to the QueA family. Monomer.

It is found in the cytoplasm. It carries out the reaction 7-aminomethyl-7-carbaguanosine(34) in tRNA + S-adenosyl-L-methionine = epoxyqueuosine(34) in tRNA + adenine + L-methionine + 2 H(+). It functions in the pathway tRNA modification; tRNA-queuosine biosynthesis. Transfers and isomerizes the ribose moiety from AdoMet to the 7-aminomethyl group of 7-deazaguanine (preQ1-tRNA) to give epoxyqueuosine (oQ-tRNA). In Staphylococcus saprophyticus subsp. saprophyticus (strain ATCC 15305 / DSM 20229 / NCIMB 8711 / NCTC 7292 / S-41), this protein is S-adenosylmethionine:tRNA ribosyltransferase-isomerase.